The following is a 676-amino-acid chain: Ribosome quality control complex subunit TCF25 (676 aa).

Disordered stretches follow at residues 1-59 and 85-147; these read MSRR…VRVN and LTDA…ENGL. Basic residues predominate over residues 123–136; the sequence is GKLRKKKKKQKNKK. S602 carries the post-translational modification Phosphoserine.

It belongs to the TCF25 family. Component of the ribosome quality control complex (RQC), composed of the E3 ubiquitin ligase LTN1, TCF25 and NEMF associated with the 60S ribosomal subunit. Interacts (via C-terminus) with NFATC4; the interaction leads to suppresson of NFATC4 transcription factor activity and is reduced following stimulation with angiotensin-2. Interacts with XIAP. In the embryo, widely expressed with highest levels in brain. In the adult, highest expression is found in the heart. Repressed in cardiac tissue of patients with heart failure (at protein level). mRNA levels in the heart are unchanged in patients with heart failure.

It localises to the nucleus. Its subcellular location is the cytoplasm. The protein localises to the cytosol. Its function is as follows. Component of the ribosome quality control complex (RQC), a ribosome-associated complex that mediates ubiquitination and extraction of incompletely synthesized nascent chains for proteasomal degradation. In the RQC complex, required to promote formation of 'Lys-48'-linked polyubiquitin chains during ubiquitination of incompletely synthesized proteins by LTN1. May negatively regulate the calcineurin-NFAT signaling cascade by suppressing the activity of transcription factor NFATC4. May play a role in cell death control. This chain is Ribosome quality control complex subunit TCF25, found in Homo sapiens (Human).